The following is a 239-amino-acid chain: Uridylate kinase (239 aa).

13 to 16 contributes to the ATP binding site; it reads KLSG. Glycine 55 serves as a coordination point for UMP. The ATP site is built by glycine 56 and arginine 60. Residues aspartate 75 and 136–143 contribute to the UMP site; that span reads TGNPFFTT. Residues threonine 163, asparagine 164, tyrosine 169, and aspartate 172 each coordinate ATP.

The protein belongs to the UMP kinase family. Homohexamer.

The protein resides in the cytoplasm. It carries out the reaction UMP + ATP = UDP + ADP. Its pathway is pyrimidine metabolism; CTP biosynthesis via de novo pathway; UDP from UMP (UMPK route): step 1/1. With respect to regulation, inhibited by UTP. Its function is as follows. Catalyzes the reversible phosphorylation of UMP to UDP. The chain is Uridylate kinase from Neisseria gonorrhoeae (strain ATCC 700825 / FA 1090).